The chain runs to 290 residues: 4-hydroxy-tetrahydrodipicolinate synthase (290 aa).

A pyruvate-binding site is contributed by threonine 48. The Proton donor/acceptor role is filled by tyrosine 137. Lysine 165 (schiff-base intermediate with substrate) is an active-site residue. Isoleucine 206 contributes to the pyruvate binding site.

Belongs to the DapA family. In terms of assembly, homotetramer; dimer of dimers.

The protein resides in the cytoplasm. It carries out the reaction L-aspartate 4-semialdehyde + pyruvate = (2S,4S)-4-hydroxy-2,3,4,5-tetrahydrodipicolinate + H2O + H(+). The protein operates within amino-acid biosynthesis; L-lysine biosynthesis via DAP pathway; (S)-tetrahydrodipicolinate from L-aspartate: step 3/4. Its function is as follows. Catalyzes the condensation of (S)-aspartate-beta-semialdehyde [(S)-ASA] and pyruvate to 4-hydroxy-tetrahydrodipicolinate (HTPA). The chain is 4-hydroxy-tetrahydrodipicolinate synthase from Ligilactobacillus salivarius (strain UCC118) (Lactobacillus salivarius).